A 103-amino-acid polypeptide reads, in one-letter code: OMEGA-ectatommitoxin(02)-Rm1d (103 aa).

The N-terminal stretch at 1–30 (MKDSYISIVIAYLMVTFILVSSMPIEGEKR) is a signal peptide. 3 disulfides stabilise this stretch: Cys39-Cys54, Cys49-Cys70, and Cys72-Cys81. Positions 43-82 (LNDENYCFNGKCVHLVAQDEPGKPYYSCICDEFYIGERCG) constitute an EGF-like domain.

This sequence belongs to the EGF domain peptide family. In terms of tissue distribution, expressed by the venom gland.

It is found in the secreted. Functionally, ant peptide with probable defensive activity which acts as a potent agonist of the mammalian epidermal growth factor receptor (EGFR). Mimics, both structurally and functionally, vertebrate epidermal growth factor (EGF) peptide hormones. In vivo, intraplantar injection in mice causes long-lasting (several days) hypersensitivity of the injected paw to both mechanical and thermal stimuli. Its long-lasting effect is unusual for venom toxins whose effects are usually immediate. One possible explanation is that it would reduce the duration of a nest attack, discourage future attacks, or enhance the actions of subsequent exposure to other pain-inducing venom peptides. The chain is OMEGA-ectatommitoxin(02)-Rm1d from Rhytidoponera metallica (Australian green-headed ant).